The chain runs to 198 residues: Pyridoxal 5'-phosphate synthase subunit PdxT (198 aa).

50–52 (GES) lines the L-glutamine pocket. Cys-82 (nucleophile) is an active-site residue. L-glutamine-binding positions include Arg-114 and 143 to 144 (IR). Residues His-179 and Glu-181 each act as charge relay system in the active site.

It belongs to the glutaminase PdxT/SNO family. In the presence of PdxS, forms a dodecamer of heterodimers. Only shows activity in the heterodimer.

The enzyme catalyses aldehydo-D-ribose 5-phosphate + D-glyceraldehyde 3-phosphate + L-glutamine = pyridoxal 5'-phosphate + L-glutamate + phosphate + 3 H2O + H(+). The catalysed reaction is L-glutamine + H2O = L-glutamate + NH4(+). It functions in the pathway cofactor biosynthesis; pyridoxal 5'-phosphate biosynthesis. In terms of biological role, catalyzes the hydrolysis of glutamine to glutamate and ammonia as part of the biosynthesis of pyridoxal 5'-phosphate. The resulting ammonia molecule is channeled to the active site of PdxS. The chain is Pyridoxal 5'-phosphate synthase subunit PdxT from Metallosphaera sedula (strain ATCC 51363 / DSM 5348 / JCM 9185 / NBRC 15509 / TH2).